Reading from the N-terminus, the 413-residue chain is Histidine--tRNA ligase (413 aa).

This sequence belongs to the class-II aminoacyl-tRNA synthetase family. In terms of assembly, homodimer.

The protein localises to the cytoplasm. The enzyme catalyses tRNA(His) + L-histidine + ATP = L-histidyl-tRNA(His) + AMP + diphosphate + H(+). The sequence is that of Histidine--tRNA ligase from Geobacter metallireducens (strain ATCC 53774 / DSM 7210 / GS-15).